Reading from the N-terminus, the 386-residue chain is WD repeat-containing protein 89 (386 aa).

6 WD repeats span residues 21–65 (KEPT…VIRE), 68–106 (GYPG…GKPV), 111–155 (GYPS…QDLS), 167–207 (THSD…EDDA), 213–253 (NSVS…TDEP), and 318–357 (GHAA…KTFT).

This chain is WD repeat-containing protein 89 (WDR89), found in Bos taurus (Bovine).